A 471-amino-acid polypeptide reads, in one-letter code: Tryptophanase (471 aa).

N6-acetyllysine is present on residues Lys-5, Lys-115, and Lys-156. At Lys-270 the chain carries N6-(pyridoxal phosphate)lysine. Position 450 is an N6-acetyllysine (Lys-450).

This sequence belongs to the beta-eliminating lyase family. As to quaternary structure, homotetramer. Pyridoxal 5'-phosphate is required as a cofactor.

The enzyme catalyses L-tryptophan + H2O = indole + pyruvate + NH4(+). Its pathway is amino-acid degradation; L-tryptophan degradation via pyruvate pathway; indole and pyruvate from L-tryptophan: step 1/1. This chain is Tryptophanase, found in Escherichia coli O139:H28 (strain E24377A / ETEC).